Consider the following 455-residue polypeptide: Signal recognition particle 54 kDa protein (455 aa).

GTP is bound by residues 104-111 (GLYGHGKT), 184-188 (DTSGR), and 242-245 (TKMD).

The protein belongs to the GTP-binding SRP family. SRP54 subfamily. In terms of assembly, part of the signal recognition particle protein translocation system, which is composed of SRP and FtsY. Archaeal SRP consists of a 7S RNA molecule of 300 nucleotides and two protein subunits: SRP54 and SRP19.

It is found in the cytoplasm. It carries out the reaction GTP + H2O = GDP + phosphate + H(+). Functionally, involved in targeting and insertion of nascent membrane proteins into the cytoplasmic membrane. Binds to the hydrophobic signal sequence of the ribosome-nascent chain (RNC) as it emerges from the ribosomes. The SRP-RNC complex is then targeted to the cytoplasmic membrane where it interacts with the SRP receptor FtsY. The polypeptide is Signal recognition particle 54 kDa protein (Thermoplasma volcanium (strain ATCC 51530 / DSM 4299 / JCM 9571 / NBRC 15438 / GSS1)).